Consider the following 43-residue polypeptide: Mu-conotoxin-like Cal 12.2c (43 aa).

Residue Arg1 is a propeptide. 4 disulfides stabilise this stretch: Cys4-Cys16, Cys11-Cys24, Cys18-Cys29, and Cys23-Cys35. At Trp31 the chain carries 6'-bromotryptophan. The residue at position 36 (Pro36) is a 4-hydroxyproline. The residue at position 40 (Trp40) is a 6'-bromotryptophan.

As to expression, expressed by the venom duct.

It is found in the secreted. Its function is as follows. Mu-conotoxins block voltage-gated sodium channels. This toxin reversibly blocks voltage-gated sodium channel in cephalopods, with no alteration in the voltage dependence of sodium conductance or on the kinetics of inactivation. The polypeptide is Mu-conotoxin-like Cal 12.2c (Californiconus californicus (California cone)).